Consider the following 336-residue polypeptide: DNA-directed RNA polymerase subunit alpha (336 aa).

The alpha N-terminal domain (alpha-NTD) stretch occupies residues M1–D232. Positions F248 to Y336 are alpha C-terminal domain (alpha-CTD).

Belongs to the RNA polymerase alpha chain family. In terms of assembly, homodimer. The RNAP catalytic core consists of 2 alpha, 1 beta, 1 beta' and 1 omega subunit. When a sigma factor is associated with the core the holoenzyme is formed, which can initiate transcription.

It catalyses the reaction RNA(n) + a ribonucleoside 5'-triphosphate = RNA(n+1) + diphosphate. DNA-dependent RNA polymerase catalyzes the transcription of DNA into RNA using the four ribonucleoside triphosphates as substrates. The sequence is that of DNA-directed RNA polymerase subunit alpha from Rhizobium radiobacter (Agrobacterium tumefaciens).